Reading from the N-terminus, the 614-residue chain is UvrABC system protein C (614 aa).

The 79-residue stretch at 26–104 (NLPGVYKMLG…IKEYRPPYNV (79 aa)) folds into the GIY-YIG domain. The 36-residue stretch at 215–250 (SDIHTALIEKMEASAEELDFEKAVFYRDQLSMLREV) folds into the UVR domain.

It belongs to the UvrC family. Interacts with UvrB in an incision complex.

The protein resides in the cytoplasm. In terms of biological role, the UvrABC repair system catalyzes the recognition and processing of DNA lesions. UvrC both incises the 5' and 3' sides of the lesion. The N-terminal half is responsible for the 3' incision and the C-terminal half is responsible for the 5' incision. This Psychrobacter cryohalolentis (strain ATCC BAA-1226 / DSM 17306 / VKM B-2378 / K5) protein is UvrABC system protein C.